Reading from the N-terminus, the 892-residue chain is Alanine--tRNA ligase (892 aa).

Histidine 594, histidine 598, cysteine 702, and histidine 706 together coordinate Zn(2+).

The protein belongs to the class-II aminoacyl-tRNA synthetase family. Zn(2+) serves as cofactor.

Its subcellular location is the cytoplasm. It carries out the reaction tRNA(Ala) + L-alanine + ATP = L-alanyl-tRNA(Ala) + AMP + diphosphate. In terms of biological role, catalyzes the attachment of alanine to tRNA(Ala) in a two-step reaction: alanine is first activated by ATP to form Ala-AMP and then transferred to the acceptor end of tRNA(Ala). Also edits incorrectly charged Ser-tRNA(Ala) and Gly-tRNA(Ala) via its editing domain. The polypeptide is Alanine--tRNA ligase (Pyrobaculum arsenaticum (strain DSM 13514 / JCM 11321 / PZ6)).